We begin with the raw amino-acid sequence, 418 residues long: UDP-N-acetylglucosamine 1-carboxyvinyltransferase (418 aa).

Residue 22-23 (KN) participates in phosphoenolpyruvate binding. Arg-92 provides a ligand contact to UDP-N-acetyl-alpha-D-glucosamine. Cys-116 acts as the Proton donor in catalysis. Residue Cys-116 is modified to 2-(S-cysteinyl)pyruvic acid O-phosphothioketal. UDP-N-acetyl-alpha-D-glucosamine is bound by residues 121–125 (RPVDL), Asp-305, and Ile-327.

It belongs to the EPSP synthase family. MurA subfamily.

The protein localises to the cytoplasm. The enzyme catalyses phosphoenolpyruvate + UDP-N-acetyl-alpha-D-glucosamine = UDP-N-acetyl-3-O-(1-carboxyvinyl)-alpha-D-glucosamine + phosphate. Its pathway is cell wall biogenesis; peptidoglycan biosynthesis. In terms of biological role, cell wall formation. Adds enolpyruvyl to UDP-N-acetylglucosamine. The chain is UDP-N-acetylglucosamine 1-carboxyvinyltransferase from Acidiphilium cryptum (strain JF-5).